Consider the following 275-residue polypeptide: Glutamate 5-kinase (275 aa).

Lys-17 serves as a coordination point for ATP. Positions 57, 144, and 160 each coordinate substrate. ATP-binding positions include 180–181 (SD) and 222–228 (TGGMLSK).

This sequence belongs to the glutamate 5-kinase family.

It localises to the cytoplasm. The enzyme catalyses L-glutamate + ATP = L-glutamyl 5-phosphate + ADP. It participates in amino-acid biosynthesis; L-proline biosynthesis; L-glutamate 5-semialdehyde from L-glutamate: step 1/2. In terms of biological role, catalyzes the transfer of a phosphate group to glutamate to form L-glutamate 5-phosphate. The sequence is that of Glutamate 5-kinase from Streptococcus pyogenes serotype M12 (strain MGAS2096).